Here is a 64-residue protein sequence, read N- to C-terminus: uncharacterized protein (64 aa).

A helical membrane pass occupies residues 33 to 55 (YTPLGSYMIFGIVHYFCSYHIGI).

The protein resides in the membrane. This is an uncharacterized protein from Saccharomyces cerevisiae (strain ATCC 204508 / S288c) (Baker's yeast).